The primary structure comprises 428 residues: Tyrosine--tRNA ligase (428 aa).

Tyr-41 contacts L-tyrosine. Residues 46–55 (PTADSLHLGH) carry the 'HIGH' region motif. Positions 179 and 183 each coordinate L-tyrosine. A 'KMSKS' region motif is present at residues 239 to 243 (KFGKT). Lys-242 provides a ligand contact to ATP. One can recognise an S4 RNA-binding domain in the interval 361–418 (ADLMQALVDAELQPSRGQARKTIASNAVTINGEKQSDPEYIFNDEDRLFGRYTLLRRG).

This sequence belongs to the class-I aminoacyl-tRNA synthetase family. TyrS type 1 subfamily. In terms of assembly, homodimer.

Its subcellular location is the cytoplasm. The enzyme catalyses tRNA(Tyr) + L-tyrosine + ATP = L-tyrosyl-tRNA(Tyr) + AMP + diphosphate + H(+). Functionally, catalyzes the attachment of tyrosine to tRNA(Tyr) in a two-step reaction: tyrosine is first activated by ATP to form Tyr-AMP and then transferred to the acceptor end of tRNA(Tyr). The protein is Tyrosine--tRNA ligase of Salmonella paratyphi C (strain RKS4594).